The following is a 101-amino-acid chain: Small ribosomal subunit protein uS14 (101 aa).

Belongs to the universal ribosomal protein uS14 family. In terms of assembly, part of the 30S ribosomal subunit. Contacts proteins S3 and S10.

Binds 16S rRNA, required for the assembly of 30S particles and may also be responsible for determining the conformation of the 16S rRNA at the A site. The sequence is that of Small ribosomal subunit protein uS14 from Roseobacter denitrificans (strain ATCC 33942 / OCh 114) (Erythrobacter sp. (strain OCh 114)).